The following is a 533-amino-acid chain: MKILLAVVFVLNLTNLAVPQHLITSSPSLPESKPVGRRPTYEEYKQQRESFLQTEDHHLLGANVTLTENEQLVNKFIMQMKLDEMEKGFNDSYNFIPARHIFEVLDRFGQSKVFNVIRRLPKGGVLHAHDMALGSTDLIVNATYLENLWQKGNFGLNHGPEFKFSRERPGKEWSLVSEIRQWMTNEVYDAKVAEVFSLYNADPLNAYKSLDNVWSKFQNLFACLAPLITFAPVWRQYYHDSLKQFYDDHVQYLEFRGVLPEVYDLDGKVYSAEEIVQLYYEETEQFKAKYPDFIGVKFIYAPGRYASDEEFQKLLDTTNRLHKKFPNFLAGFDLVGQEDPGRSLFEFAPALLKLPASINFFFHAGETNWYGMKTDQNLVDAVLLGTKRIGHGFAVLKHPKVLKEIKRRQICIEINPISNQVLKLVQDQRNHPAALLFSDNYPVVVSSDDPSFGRSTPLSHDFYVAFTGIASAKQDWRWLKQLALNSIEYSAMNSEEKTVAKEKWNQAWDHQFSRLAVDFVAGKILENWIMKIV.

Positions 1 to 19 (MKILLAVVFVLNLTNLAVP) are cleaved as a signal peptide.

It belongs to the metallo-dependent hydrolases superfamily. Adenosine and AMP deaminases family. ADGF subfamily. It depends on Zn(2+) as a cofactor. Proteolytically cleaved by human mast cell tryptase and chymase. Female salivary gland (at protein level).

The protein localises to the secreted. It catalyses the reaction adenosine + H2O + H(+) = inosine + NH4(+). The catalysed reaction is 2'-deoxyadenosine + H2O + H(+) = 2'-deoxyinosine + NH4(+). In terms of biological role, catalyzes the deamination of adenosine to inosine and deoxyadenosine to deoxyinosine. Induces degranulation of host mast cells, and secretion of tryptase and IL6. Modulates enzymatic activities of human tryptase and chymase. Induces release of cytokines, such as IL1B, IL6, TNF, CCL2, IFN-beta (INFB1) and ISG15, from host monocytes and macrophages. Activates host NF-kappa-B signaling pathway in TAK1/MAP3K7-dependent manner. (Microbial infection) Promotes replication of dengue virus type 2 in host cells probably via modulation of cytokine production in host macrophages and monocytes. This chain is Adenosine deaminase, found in Aedes albopictus (Asian tiger mosquito).